Reading from the N-terminus, the 120-residue chain is Protein GP96 (120 aa).

This sequence belongs to the herpesviridae UL96 family.

This Cavia porcellus (Guinea pig) protein is Protein GP96.